A 330-amino-acid chain; its full sequence is Ketol-acid reductoisomerase (NADP(+)) (330 aa).

The KARI N-terminal Rossmann domain occupies Met1–Thr181. Residues Tyr24 to Gln27, Arg47, Ser52, and Asp82 to Gln85 each bind NADP(+). Residue His107 is part of the active site. Residue Gly133 coordinates NADP(+). In terms of domain architecture, KARI C-terminal knotted spans Thr182–Gln327. Asp190, Glu194, Glu226, and Glu230 together coordinate Mg(2+). Residue Ser251 participates in substrate binding.

It belongs to the ketol-acid reductoisomerase family. Requires Mg(2+) as cofactor.

The catalysed reaction is (2R)-2,3-dihydroxy-3-methylbutanoate + NADP(+) = (2S)-2-acetolactate + NADPH + H(+). It catalyses the reaction (2R,3R)-2,3-dihydroxy-3-methylpentanoate + NADP(+) = (S)-2-ethyl-2-hydroxy-3-oxobutanoate + NADPH + H(+). The protein operates within amino-acid biosynthesis; L-isoleucine biosynthesis; L-isoleucine from 2-oxobutanoate: step 2/4. It participates in amino-acid biosynthesis; L-valine biosynthesis; L-valine from pyruvate: step 2/4. In terms of biological role, involved in the biosynthesis of branched-chain amino acids (BCAA). Catalyzes an alkyl-migration followed by a ketol-acid reduction of (S)-2-acetolactate (S2AL) to yield (R)-2,3-dihydroxy-isovalerate. In the isomerase reaction, S2AL is rearranged via a Mg-dependent methyl migration to produce 3-hydroxy-3-methyl-2-ketobutyrate (HMKB). In the reductase reaction, this 2-ketoacid undergoes a metal-dependent reduction by NADPH to yield (R)-2,3-dihydroxy-isovalerate. This Methanobrevibacter smithii (strain ATCC 35061 / DSM 861 / OCM 144 / PS) protein is Ketol-acid reductoisomerase (NADP(+)).